The primary structure comprises 502 residues: Cytochrome P450 71B20 (502 aa).

A helical membrane pass occupies residues 1-21; the sequence is MAISFLCFCLITLASLIFFAK. Cys-444 serves as a coordination point for heme.

The protein belongs to the cytochrome P450 family. It depends on heme as a cofactor.

Its subcellular location is the membrane. This chain is Cytochrome P450 71B20 (CYP71B20), found in Arabidopsis thaliana (Mouse-ear cress).